The chain runs to 568 residues: Urease subunit alpha (568 aa).

Positions 131-568 (GGIDTHIHFI…LPMAQRYFLF (438 aa)) constitute a Urease domain. Positions 136, 138, and 219 each coordinate Ni(2+). Residue Lys219 is modified to N6-carboxylysine. Residue His221 participates in substrate binding. 2 residues coordinate Ni(2+): His248 and His274. The active-site Proton donor is His322. A Ni(2+)-binding site is contributed by Asp362.

Belongs to the metallo-dependent hydrolases superfamily. Urease alpha subunit family. As to quaternary structure, heterotrimer of UreA (gamma), UreB (beta) and UreC (alpha) subunits. Three heterotrimers associate to form the active enzyme. Ni cation is required as a cofactor. Carboxylation allows a single lysine to coordinate two nickel ions.

The protein resides in the cytoplasm. It carries out the reaction urea + 2 H2O + H(+) = hydrogencarbonate + 2 NH4(+). The protein operates within nitrogen metabolism; urea degradation; CO(2) and NH(3) from urea (urease route): step 1/1. The polypeptide is Urease subunit alpha (Trichormus variabilis (strain ATCC 29413 / PCC 7937) (Anabaena variabilis)).